Reading from the N-terminus, the 520-residue chain is Putative cytochrome P450 CYP13A4 (520 aa).

Cys464 contributes to the heme binding site.

It belongs to the cytochrome P450 family. The cofactor is heme.

Cytochromes P450 are a group of heme-thiolate monooxygenases. They oxidize a variety of structurally unrelated compounds, including steroids, fatty acids, and xenobiotics. This Caenorhabditis elegans protein is Putative cytochrome P450 CYP13A4 (cyp-13A4).